The chain runs to 475 residues: Aspartyl/glutamyl-tRNA(Asn/Gln) amidotransferase subunit B (475 aa).

It belongs to the GatB/GatE family. GatB subfamily. In terms of assembly, heterotrimer of A, B and C subunits.

The catalysed reaction is L-glutamyl-tRNA(Gln) + L-glutamine + ATP + H2O = L-glutaminyl-tRNA(Gln) + L-glutamate + ADP + phosphate + H(+). It carries out the reaction L-aspartyl-tRNA(Asn) + L-glutamine + ATP + H2O = L-asparaginyl-tRNA(Asn) + L-glutamate + ADP + phosphate + 2 H(+). In terms of biological role, allows the formation of correctly charged Asn-tRNA(Asn) or Gln-tRNA(Gln) through the transamidation of misacylated Asp-tRNA(Asn) or Glu-tRNA(Gln) in organisms which lack either or both of asparaginyl-tRNA or glutaminyl-tRNA synthetases. The reaction takes place in the presence of glutamine and ATP through an activated phospho-Asp-tRNA(Asn) or phospho-Glu-tRNA(Gln). This chain is Aspartyl/glutamyl-tRNA(Asn/Gln) amidotransferase subunit B, found in Bacillus cereus (strain ZK / E33L).